Here is a 104-residue protein sequence, read N- to C-terminus: Flagellar hook-basal body complex protein FliE (104 aa).

This sequence belongs to the FliE family.

The protein localises to the bacterial flagellum basal body. In Escherichia coli (strain SE11), this protein is Flagellar hook-basal body complex protein FliE.